The primary structure comprises 497 residues: PHD finger protein 10 (497 aa).

The span at 1-13 (MTAAGPGAAPSPG) shows a compositional bias: low complexity. Residues 1–61 (MTAAGPGAAP…SSRSCETSSQ (61 aa)) form a disordered region. Phosphoserine occurs at positions 11, 35, and 49. Residues 88 to 184 (MLQEQVSEYL…HYKEYSQMQQ (97 aa)) are essential to induce neural progenitor proliferation. Positions 88-294 (MLQEQVSEYL…PPLDPELPAL (207 aa)) are SAY. Residue lysine 240 forms a Glycyl lysine isopeptide (Lys-Gly) (interchain with G-Cter in SUMO2) linkage. Serine 269 is modified (phosphoserine). A compositionally biased stretch (low complexity) spans 284-295 (EPPLDPELPALD). The segment at 284–368 (EPPLDPELPA…RSVLSKSAPG (85 aa)) is disordered. The essential to induce neural progenitor proliferation stretch occupies residues 291 to 333 (LPALDSDGDSDDGEDGGGDEKRKNKGTSDSSSGNVSEGDSPPD). A phosphoserine mark is found at serine 296, serine 300, serine 326, and serine 330. The span at 296 to 307 (SDGDSDDGEDGG) shows a compositional bias: acidic residues. The segment covering 317–327 (TSDSSSGNVSE) has biased composition (polar residues). Over residues 337 to 358 (DTFHGRQKSKDKMATPRKDGSK) the composition is skewed to basic and acidic residues. A PHD-type 1; degenerate zinc finger spans residues 378-435 (LCGICLKGKESNKKGKAESLIHCSQCDNSGHPSCLDMTMELVSMIKTYPWQCMECKTC). A Glycyl lysine isopeptide (Lys-Gly) (interchain with G-Cter in SUMO2) cross-link involves residue lysine 384. The PHD-type 2; degenerate zinc finger occupies 437 to 480 (ICGQPHHEEEMMFCDVCDRGYHTFCVGLGAIPSGRWICDCCQRA).

The protein belongs to the SAYP family. As to quaternary structure, component of neural progenitors-specific chromatin remodeling complex (npBAF complex) composed of at least, ARID1A/BAF250A or ARID1B/BAF250B, SMARCD1/BAF60A, SMARCD3/BAF60C, SMARCA2/BRM/BAF190B, SMARCA4/BRG1/BAF190A, SMARCB1/BAF47, SMARCC1/BAF155, SMARCE1/BAF57, SMARCC2/BAF170, PHF10/BAF45A, ACTL6A/BAF53A and actin. Interacts with ACTL6A/BAF53A, SMARCA2/BRM/BAF190B, SMARCA4/BRG1/BAF190A and PBRM1/BAF180. Widely expressed. Expressed selectively in neural stem and progenitor cells (at protein level).

It is found in the nucleus. Its function is as follows. Involved in transcription activity regulation by chromatin remodeling. Belongs to the neural progenitors-specific chromatin remodeling complex (npBAF complex) and is required for the proliferation of neural progenitors. During neural development a switch from a stem/progenitor to a post-mitotic chromatin remodeling mechanism occurs as neurons exit the cell cycle and become committed to their adult state. The transition from proliferating neural stem/progenitor cells to post-mitotic neurons requires a switch in subunit composition of the npBAF and nBAF complexes. As neural progenitors exit mitosis and differentiate into neurons, npBAF complexes which contain ACTL6A/BAF53A and PHF10/BAF45A, are exchanged for homologous alternative ACTL6B/BAF53B and DPF1/BAF45B or DPF3/BAF45C subunits in neuron-specific complexes (nBAF). The npBAF complex is essential for the self-renewal/proliferative capacity of the multipotent neural stem cells. The nBAF complex along with CREST plays a role regulating the activity of genes essential for dendrite growth. This is PHD finger protein 10 (Phf10) from Mus musculus (Mouse).